The chain runs to 158 residues: Transcriptional repressor NrdR (158 aa).

A zinc finger lies at Cys-3–Cys-34. In terms of domain architecture, ATP-cone spans Ile-49–Asp-139.

It belongs to the NrdR family. Zn(2+) serves as cofactor.

Negatively regulates transcription of bacterial ribonucleotide reductase nrd genes and operons by binding to NrdR-boxes. The polypeptide is Transcriptional repressor NrdR (Prochlorococcus marinus (strain MIT 9303)).